A 211-amino-acid polypeptide reads, in one-letter code: Pyridoxine/pyridoxamine 5'-phosphate oxidase (211 aa).

Substrate is bound by residues 7–10 (RREY) and lysine 65. Residues 60 to 65 (RIVLLK), 75 to 76 (YT), arginine 81, lysine 82, and glutamine 104 each bind FMN. The substrate site is built by tyrosine 122, arginine 126, and serine 130. FMN contacts are provided by residues 139–140 (QS) and tryptophan 184. 190-192 (RLH) provides a ligand contact to substrate. An FMN-binding site is contributed by arginine 194.

It belongs to the pyridoxamine 5'-phosphate oxidase family. As to quaternary structure, homodimer. Requires FMN as cofactor.

The enzyme catalyses pyridoxamine 5'-phosphate + O2 + H2O = pyridoxal 5'-phosphate + H2O2 + NH4(+). The catalysed reaction is pyridoxine 5'-phosphate + O2 = pyridoxal 5'-phosphate + H2O2. It participates in cofactor metabolism; pyridoxal 5'-phosphate salvage; pyridoxal 5'-phosphate from pyridoxamine 5'-phosphate: step 1/1. Its pathway is cofactor metabolism; pyridoxal 5'-phosphate salvage; pyridoxal 5'-phosphate from pyridoxine 5'-phosphate: step 1/1. In terms of biological role, catalyzes the oxidation of either pyridoxine 5'-phosphate (PNP) or pyridoxamine 5'-phosphate (PMP) into pyridoxal 5'-phosphate (PLP). This is Pyridoxine/pyridoxamine 5'-phosphate oxidase from Photobacterium profundum (strain SS9).